The sequence spans 296 residues: MNELIAIVGPTAVGKTELAVAWAQRINGEIVSADSRQIYRKMNIGTAKPSATEQALAPHHLIDIRDPEQSFSLAEFQDLALAAIADIQARGHVPLLVGGTGQYLAAVLEGWQIPRVPPQPELRAELEQVALHEGPATLHARLAAVDPVAAARIPPTNVRRVIRALEVYLVSGEPISRLQERQPPPFRPRTIWLHRPRTELYARADARIERMIAAGLVDEVAELLAGGYDWSLPAMSSLGYIQFRPYFEGTADLTTCIERLRFDTHAFIRRQEMWFRRLPNLEIWTPDHPDWRAIIA.

9 to 16 (GPTAVGKT) contributes to the ATP binding site. 11–16 (TAVGKT) lines the substrate pocket. The tract at residues 34–37 (DSRQ) is interaction with substrate tRNA.

The protein belongs to the IPP transferase family. In terms of assembly, monomer. Mg(2+) is required as a cofactor.

The enzyme catalyses adenosine(37) in tRNA + dimethylallyl diphosphate = N(6)-dimethylallyladenosine(37) in tRNA + diphosphate. Functionally, catalyzes the transfer of a dimethylallyl group onto the adenine at position 37 in tRNAs that read codons beginning with uridine, leading to the formation of N6-(dimethylallyl)adenosine (i(6)A). This Chloroflexus aggregans (strain MD-66 / DSM 9485) protein is tRNA dimethylallyltransferase.